A 147-amino-acid chain; its full sequence is Large ribosomal subunit protein uL15 (147 aa).

Basic and acidic residues predominate over residues 1–20; that stretch reads MTLRLNDLKPADGARTERTR. The disordered stretch occupies residues 1–61; it reads MTLRLNDLKP…GFEGGQTPMQ (61 aa). A compositionally biased stretch (gly residues) spans 23-33; the sequence is RGIGSGLGKTA. Positions 34–47 are enriched in basic residues; sequence GRGHKGSFARKGGG.

The protein belongs to the universal ribosomal protein uL15 family. In terms of assembly, part of the 50S ribosomal subunit.

Its function is as follows. Binds to the 23S rRNA. The chain is Large ribosomal subunit protein uL15 from Xanthomonas euvesicatoria pv. vesicatoria (strain 85-10) (Xanthomonas campestris pv. vesicatoria).